The primary structure comprises 269 residues: 3'(2'),5'-bisphosphate nucleotidase CysQ (269 aa).

Mg(2+)-binding residues include Glu69, Asp89, Leu91, Asp92, and Asp216. Substrate is bound at residue Glu69. Residues 91 to 94 (LDGT) and Asp216 each bind substrate.

This sequence belongs to the inositol monophosphatase superfamily. CysQ family. Mg(2+) is required as a cofactor.

The protein resides in the cell inner membrane. The enzyme catalyses adenosine 3',5'-bisphosphate + H2O = AMP + phosphate. Its function is as follows. Converts adenosine-3',5'-bisphosphate (PAP) to AMP. The sequence is that of 3'(2'),5'-bisphosphate nucleotidase CysQ from Aggregatibacter actinomycetemcomitans (Actinobacillus actinomycetemcomitans).